The sequence spans 455 residues: GTPase Der (455 aa).

EngA-type G domains follow at residues 4–169 (PVVA…PPKD) and 178–353 (IQMA…EQHR). GTP contacts are provided by residues 10–17 (GRPNVGKS), 57–61 (DTGGL), 120–123 (NKCE), 184–191 (GRPNVGKS), 231–235 (DTAGI), and 296–299 (NKWD). Positions 354–439 (RRVSTSVVNE…PVKLYWRGKQ (86 aa)) constitute a KH-like domain.

The protein belongs to the TRAFAC class TrmE-Era-EngA-EngB-Septin-like GTPase superfamily. EngA (Der) GTPase family. As to quaternary structure, associates with the 50S ribosomal subunit.

Functionally, GTPase that plays an essential role in the late steps of ribosome biogenesis. The protein is GTPase Der of Parasynechococcus marenigrum (strain WH8102).